Here is a 98-residue protein sequence, read N- to C-terminus: mRNA interferase toxin MqsR (98 aa).

As to quaternary structure, might be a dimer. Also reported to be a monomer. Crystallizes as a heterotetramer with MqsA, MqsR-MqsA(2)-MqsR. Purifies as a possible heterohexamer of 2 MqsR dimers and 1 MqsA dimer. When the 2 dissociate the MsqR mRNA interferase becomes active.

Functionally, toxic component of a type II toxin-antitoxin (TA) system. Plays a significant role in the control of biofilm formation and induction of persister cells in the presence of antibiotics. An mRNA interferase which has been reported to be translation-independent. It has also been reported to be translation-dependent. Cleavage has been reported to occur on either side of G in the sequence GCU. Also reported to cleave after C in GC(A/U) sequences. There are only 14 genes in E.coli W3110 (and probably also MG1655) that do not have a GCU sequence and thus are resistant to the mRNA interferase activity; among these is the gene for toxin GhoT. Overexpression of MqsR causes cessation of cell growth and inhibits cell proliferation via inhibition of translation as well as increasing persister cell formation; these effects are overcome by concomitant or subsequent expression of antitoxin MqsA. Cross-talk can occur between different TA systems. Ectopic expression of this toxin induces transcription of the relBEF TA system operon with specific cleavage of the relBEF mRNA produced. Regulates the expression of GhoT/GhoS, a type V TA system. Persistence depends on toxin GhoT activity, which MqsR controls at the post-transcriptional level by selectively degrading the antitoxin ghoS segment of the ghoST mRNA. Overexpression leads to a dramatic increase in tolerance to the antibiotic ofloxacin. This TA system mediates cell growth during bile acid deoxycholate stress by degrading mRNA for probable deoxycholate-binding protein YgiS; bile acid detergents such as deoxycholate are important for host defense against bacterial growth in the gall bladder and duodenum. In terms of biological role, initially reported to act as a cotranscription factor with MqsA. Following further experiments, the MqsR-MqsA complex does not bind DNA and all reported data are actually due to a small fraction of free MqsA alone binding DNA. Addition of MqsR to a preformed MqsA-promoter DNA complex causes dissociation of the MqsA-DNA complex, probably causing derepression of MqsA-repressed transcripts. Does not bind DNA in the presence or absence of MqsA. This is mRNA interferase toxin MqsR from Escherichia coli (strain K12).